Reading from the N-terminus, the 295-residue chain is 4-hydroxy-tetrahydrodipicolinate synthase (295 aa).

Thr-47 provides a ligand contact to pyruvate. The Proton donor/acceptor role is filled by Tyr-135. The active-site Schiff-base intermediate with substrate is the Lys-163. Ile-206 contacts pyruvate.

The protein belongs to the DapA family. Homodimer.

Its subcellular location is the cytoplasm. It catalyses the reaction L-aspartate 4-semialdehyde + pyruvate = (2S,4S)-4-hydroxy-2,3,4,5-tetrahydrodipicolinate + H2O + H(+). It participates in amino-acid biosynthesis; L-lysine biosynthesis via DAP pathway; (S)-tetrahydrodipicolinate from L-aspartate: step 3/4. In terms of biological role, catalyzes the condensation of (S)-aspartate-beta-semialdehyde [(S)-ASA] and pyruvate to 4-hydroxy-tetrahydrodipicolinate (HTPA). The sequence is that of 4-hydroxy-tetrahydrodipicolinate synthase from Staphylococcus saprophyticus subsp. saprophyticus (strain ATCC 15305 / DSM 20229 / NCIMB 8711 / NCTC 7292 / S-41).